The primary structure comprises 190 residues: UPF0301 protein Psyr_0485 (190 aa).

The protein belongs to the UPF0301 (AlgH) family.

This is UPF0301 protein Psyr_0485 from Pseudomonas syringae pv. syringae (strain B728a).